Here is a 267-residue protein sequence, read N- to C-terminus: MWWFQQGLSFLPSALVIWTFATFIFSYITAITLHHVDPALPYISDTGTIPPERCLFGVMLNIAAVLGIATMYVRYKQVHALNPEENLIIKLNKAGLVLGILSCLGLSLVANFQKSTLFIVHVCGAVLAFSMGSFYMFVQTILSYQMQPKIHSKQVFWVRLLLVIWCGVSALSMMTCSSILYSSDFGPDVVQKLHWNPEDKGYVLHLVTTAAEWSMSFSFFGFFLTYIRDFQKITLRVEANLHGLTLYDTVPCPVNNERTPLLSRDFQ.

Helical transmembrane passes span 8-28 (LSFL…FSYI), 53-73 (RCLF…TMYV), 87-107 (LIIK…LGLS), 118-138 (FIVH…YMFV), 160-180 (LLLV…SSIL), and 203-223 (VLHL…FGFF).

It belongs to the DRAM/TMEM150 family. Expressed in the retina.

The protein localises to the lysosome membrane. It localises to the photoreceptor inner segment. The protein resides in the apical cell membrane. Plays a role in the initiation of autophagy. In the retina, might be involved in the process of photoreceptor cells renewal and recycling to preserve visual function. Induces apoptotic cell death when coexpressed with DRAM1. This Mus musculus (Mouse) protein is DNA damage-regulated autophagy modulator protein 2 (Dram2).